A 488-amino-acid polypeptide reads, in one-letter code: Cis-aconitate decarboxylase (488 aa).

The protein belongs to the PrpD family. In terms of assembly, homodimer. As to expression, expressed in LPS-tolerized macrophages (at protein level). Expressed in the luminal epithelial cells of pregnant uterus. Expressed in microglia and macrophage cells.

It localises to the mitochondrion. The enzyme catalyses cis-aconitate + H(+) = itaconate + CO2. Functionally, cis-aconitate decarboxylase that catalyzes production of itaconate and is involved in the inhibition of the inflammatory response. Acts as a negative regulator of the Toll-like receptors (TLRs)-mediated inflammatory innate response by stimulating the tumor necrosis factor alpha-induced protein TNFAIP3 expression via reactive oxygen species (ROS) in LPS-tolerized macrophages. Involved in antimicrobial response of innate immune cells; ACOD1-mediated itaconic acid production contributes to the antimicrobial activity of macrophages by generating itaconate, leading to alkylation of proteins, such as TFEB. Involved in antiviral response following infection by flavivirus in neurons: ACOD1-mediated itaconate production inhibits the activity of succinate dehydrogenase, generating a metabolic state in neurons that suppresses replication of viral genomes. Plays a role in the embryo implantation. The polypeptide is Cis-aconitate decarboxylase (Mus musculus (Mouse)).